Here is a 193-residue protein sequence, read N- to C-terminus: Selenate reductase assembly chaperone protein (193 aa).

This sequence belongs to the type II DMSO reductase enzyme chaperone family.

Its subcellular location is the cytoplasm. In terms of biological role, may function as a system-specific chaperone protein essential for the assembly of an active selenate reductase SerABC. The polypeptide is Selenate reductase assembly chaperone protein (Thauera selenatis).